A 391-amino-acid chain; its full sequence is MSIVRMTDLDLSGKRVLIRQDLNVPIDNGQITSEQRITASVPTIKLALEKGAAVMVTSHLGRPKEGSWTEEDSLAPVATRLAALLGVDVPLVRDWVDGVEVAPGQVVLLENCRMNVGEGKDDETLARKYAALCDVFVMDAFGTAHRAQASTHGVIRFAPVAAGGPLLMAELDALAKALDNPAKPLLAIVAGSKVSTKLELLSNLVNKVDQLIVGGGIANTFIAAAGHAVGKSLNEPDLIPTANRIVADAKARGAEIPLPTDVVVAKQFLPDAQASVKSLDAVDADDLILDIGPQTAQRYAELIASAGTVVWNGPVGVFEFESFSHGTETLARAIASSKAFSIAGGGDTLAAVDKYDIAQDVTYISTGGGAFLEFLEGKTLPAVAALQARGQ.

Substrate-binding positions include 21 to 23 (DLN), arginine 36, 59 to 62 (HLGR), arginine 113, and arginine 146. ATP-binding positions include lysine 197, glutamate 319, and 345 to 348 (GGDT).

The protein belongs to the phosphoglycerate kinase family. As to quaternary structure, monomer.

The protein localises to the cytoplasm. It catalyses the reaction (2R)-3-phosphoglycerate + ATP = (2R)-3-phospho-glyceroyl phosphate + ADP. It participates in carbohydrate degradation; glycolysis; pyruvate from D-glyceraldehyde 3-phosphate: step 2/5. The sequence is that of Phosphoglycerate kinase from Xanthomonas axonopodis pv. citri (strain 306).